The sequence spans 239 residues: tRNA (guanine-N(7)-)-methyltransferase (239 aa).

Glu69, Glu94, Asp121, and Asp144 together coordinate S-adenosyl-L-methionine. Asp144 is an active-site residue. Residue Lys148 coordinates substrate. The interval 150 to 155 (RHNKRR) is interaction with RNA. Substrate contacts are provided by residues Asp180 and 217–220 (TKFE).

The protein belongs to the class I-like SAM-binding methyltransferase superfamily. TrmB family. In terms of assembly, monomer.

The catalysed reaction is guanosine(46) in tRNA + S-adenosyl-L-methionine = N(7)-methylguanosine(46) in tRNA + S-adenosyl-L-homocysteine. Its pathway is tRNA modification; N(7)-methylguanine-tRNA biosynthesis. Its function is as follows. Catalyzes the formation of N(7)-methylguanine at position 46 (m7G46) in tRNA. The sequence is that of tRNA (guanine-N(7)-)-methyltransferase from Shigella flexneri serotype 5b (strain 8401).